A 123-amino-acid polypeptide reads, in one-letter code: UPF0102 protein VSAL_I2655 (123 aa).

Belongs to the UPF0102 family.

This chain is UPF0102 protein VSAL_I2655, found in Aliivibrio salmonicida (strain LFI1238) (Vibrio salmonicida (strain LFI1238)).